Reading from the N-terminus, the 278-residue chain is Msm operon regulatory protein (278 aa).

The HTH araC/xylS-type domain maps to 176-274; that stretch reads NQVKKIIHSQ…GKSPSKFRKE (99 aa). 2 consecutive DNA-binding regions (H-T-H motif) follow at residues 193-214 and 241-264; these read NDIAKKLNLSRSYLYKIFRKST and IAEISNSVGFSDSLAFSKAFKNYF.

In terms of biological role, regulatory protein for the msm operon for multiple sugar metabolism. Activates the transcription of the msmEFGK, aga, dexB and gftA genes. This chain is Msm operon regulatory protein (msmR), found in Streptococcus mutans serotype c (strain ATCC 700610 / UA159).